A 347-amino-acid polypeptide reads, in one-letter code: Lipopolysaccharide core heptosyltransferase OpsX (347 aa).

This sequence belongs to the glycosyltransferase 9 family.

Its pathway is bacterial outer membrane biogenesis; LPS core biosynthesis. Its function is as follows. Catalyzes heptose transfer to the lipopolysaccharide core. It transfers the first L-glycero-D-manno-heptose to the phosphorylated 3-deoxy-alpha-D-manno-octulosonic acid (Kdo-P) of the inner core. The chain is Lipopolysaccharide core heptosyltransferase OpsX from Haemophilus influenzae (strain ATCC 51907 / DSM 11121 / KW20 / Rd).